A 151-amino-acid polypeptide reads, in one-letter code: Deoxyuridine 5'-triphosphate nucleotidohydrolase (151 aa).

Substrate-binding positions include Arg70–Gly72, Asn83, Leu87–Asp89, and Met97.

The protein belongs to the dUTPase family. Mg(2+) is required as a cofactor.

It catalyses the reaction dUTP + H2O = dUMP + diphosphate + H(+). The protein operates within pyrimidine metabolism; dUMP biosynthesis; dUMP from dCTP (dUTP route): step 2/2. Its function is as follows. This enzyme is involved in nucleotide metabolism: it produces dUMP, the immediate precursor of thymidine nucleotides and it decreases the intracellular concentration of dUTP so that uracil cannot be incorporated into DNA. The sequence is that of Deoxyuridine 5'-triphosphate nucleotidohydrolase from Actinobacillus succinogenes (strain ATCC 55618 / DSM 22257 / CCUG 43843 / 130Z).